Consider the following 209-residue polypeptide: Molybdenum cofactor guanylyltransferase (209 aa).

GTP is bound by residues 13-15 (LAG), lysine 26, asparagine 54, aspartate 74, and aspartate 104. A Mg(2+)-binding site is contributed by aspartate 104.

It belongs to the MobA family. In terms of assembly, monomer. Mg(2+) serves as cofactor.

The protein resides in the cytoplasm. The enzyme catalyses Mo-molybdopterin + GTP + H(+) = Mo-molybdopterin guanine dinucleotide + diphosphate. Its function is as follows. Transfers a GMP moiety from GTP to Mo-molybdopterin (Mo-MPT) cofactor (Moco or molybdenum cofactor) to form Mo-molybdopterin guanine dinucleotide (Mo-MGD) cofactor. This Acinetobacter baumannii (strain ACICU) protein is Molybdenum cofactor guanylyltransferase.